The sequence spans 211 residues: Urease accessory protein UreG (211 aa).

11-18 (GPVGSGKT) is a GTP binding site.

This sequence belongs to the SIMIBI class G3E GTPase family. UreG subfamily. Homodimer. UreD, UreF and UreG form a complex that acts as a GTP-hydrolysis-dependent molecular chaperone, activating the urease apoprotein by helping to assemble the nickel containing metallocenter of UreC. The UreE protein probably delivers the nickel.

The protein localises to the cytoplasm. Functionally, facilitates the functional incorporation of the urease nickel metallocenter. This process requires GTP hydrolysis, probably effectuated by UreG. The sequence is that of Urease accessory protein UreG from Laribacter hongkongensis (strain HLHK9).